Reading from the N-terminus, the 37-residue chain is Large ribosomal subunit protein bL36c (37 aa).

The protein belongs to the bacterial ribosomal protein bL36 family.

The protein localises to the plastid. Its subcellular location is the chloroplast. In Welwitschia mirabilis (Tree tumbo), this protein is Large ribosomal subunit protein bL36c.